A 141-amino-acid polypeptide reads, in one-letter code: Large-conductance mechanosensitive channel (141 aa).

The next 3 helical transmembrane spans lie at 17–37, 40–60, and 86–106; these read MDLA…ASIV, LIMP…LFIA, and GNFV…FIIV.

This sequence belongs to the MscL family. Homopentamer.

The protein localises to the cell inner membrane. Channel that opens in response to stretch forces in the membrane lipid bilayer. May participate in the regulation of osmotic pressure changes within the cell. The sequence is that of Large-conductance mechanosensitive channel from Thiobacillus denitrificans (strain ATCC 25259 / T1).